The sequence spans 202 residues: Imidazoleglycerol-phosphate dehydratase (202 aa).

Belongs to the imidazoleglycerol-phosphate dehydratase family.

It is found in the cytoplasm. The catalysed reaction is D-erythro-1-(imidazol-4-yl)glycerol 3-phosphate = 3-(imidazol-4-yl)-2-oxopropyl phosphate + H2O. The protein operates within amino-acid biosynthesis; L-histidine biosynthesis; L-histidine from 5-phospho-alpha-D-ribose 1-diphosphate: step 6/9. In Rhizobium meliloti (strain 1021) (Ensifer meliloti), this protein is Imidazoleglycerol-phosphate dehydratase.